Here is a 1401-residue protein sequence, read N- to C-terminus: DNA-directed RNA polymerase subunit beta' (1401 aa).

Residues cysteine 70, cysteine 72, cysteine 85, and cysteine 88 each contribute to the Zn(2+) site. The Mg(2+) site is built by aspartate 460, aspartate 462, and aspartate 464. Cysteine 808, cysteine 882, cysteine 889, and cysteine 892 together coordinate Zn(2+).

Belongs to the RNA polymerase beta' chain family. The RNAP catalytic core consists of 2 alpha, 1 beta, 1 beta' and 1 omega subunit. When a sigma factor is associated with the core the holoenzyme is formed, which can initiate transcription. Mg(2+) serves as cofactor. Requires Zn(2+) as cofactor.

The catalysed reaction is RNA(n) + a ribonucleoside 5'-triphosphate = RNA(n+1) + diphosphate. DNA-dependent RNA polymerase catalyzes the transcription of DNA into RNA using the four ribonucleoside triphosphates as substrates. This chain is DNA-directed RNA polymerase subunit beta', found in Legionella pneumophila (strain Lens).